A 211-amino-acid polypeptide reads, in one-letter code: Abscisic acid receptor PYL7 (211 aa).

The interval 29–180 (HHCRENQCTS…NLKSLACVSE (152 aa)) is START-like. 2 cysteine pairs are disulfide-bonded: cysteine 31–cysteine 161 and cysteine 36–cysteine 161. Abscisate is bound by residues lysine 65, 93-98 (ATTSTE), 120-126 (RLKNYSS), and glutamate 145. The short motif at 89–93 (SGLPA) is the Gate loop element. A Latch loop motif is present at residues 119–121 (HRL).

It belongs to the PYR/PYL/RCAR abscisic acid intracellular receptor family. Homodimer. Binds ABA on one subunit only. Binds to CARs protein in an ABA-independent manner, both at the plasma membrane and in the nucleus. Interacts with ABI1, and possibly with other PP2Cs.

The protein resides in the cytoplasm. Its subcellular location is the nucleus. The protein localises to the cell membrane. Its function is as follows. Receptor for abscisic acid (ABA) required for ABA-mediated responses such as stomatal closure and germination inhibition. Inhibits the activity of group-A protein phosphatases type 2C (PP2Cs) when activated by ABA. This is Abscisic acid receptor PYL7 (PYL7) from Arabidopsis thaliana (Mouse-ear cress).